Consider the following 396-residue polypeptide: Argininosuccinate synthase (396 aa).

9–17 lines the ATP pocket; sequence AFSGGLDTT. Tyr-86 is a binding site for L-citrulline. Gly-116 contributes to the ATP binding site. Thr-118, Asn-122, and Asp-123 together coordinate L-aspartate. Residue Asn-122 participates in L-citrulline binding. 5 residues coordinate L-citrulline: Arg-126, Ser-172, Ser-181, Glu-254, and Tyr-266.

It belongs to the argininosuccinate synthase family. Type 1 subfamily. In terms of assembly, homotetramer.

It localises to the cytoplasm. It carries out the reaction L-citrulline + L-aspartate + ATP = 2-(N(omega)-L-arginino)succinate + AMP + diphosphate + H(+). It participates in amino-acid biosynthesis; L-arginine biosynthesis; L-arginine from L-ornithine and carbamoyl phosphate: step 2/3. This is Argininosuccinate synthase from Halobacterium salinarum (strain ATCC 700922 / JCM 11081 / NRC-1) (Halobacterium halobium).